We begin with the raw amino-acid sequence, 158 residues long: UPF0329 protein ECU06_0050 (158 aa).

The protein belongs to the UPF0329 family.

The protein is UPF0329 protein ECU06_0050 of Encephalitozoon cuniculi (strain GB-M1) (Microsporidian parasite).